We begin with the raw amino-acid sequence, 468 residues long: Tapasin-related protein (468 aa).

An N-terminal signal peptide occupies residues 1–18 (MGTQEGWCLLLCLALSGA). Over 19–405 (AETKPHPAEG…STQVVPPERR (387 aa)) the chain is Lumenal. The Ig-like V-type domain maps to 181–297 (PQGTVRTAVE…SLYRAQQIIQ (117 aa)). Disulfide bonds link Cys212–Cys283 and Cys321–Cys382. Positions 304–394 (PKVRLSLANE…THISLEEPLG (91 aa)) constitute an Ig-like C1-type domain. A helical transmembrane segment spans residues 406–426 (TALGVIFASSLFLLALMFLGL). Over 427–468 (QRRQAPTGLGLLQAERWETTSCADTQSSHLHEDRTARVSQPS) the chain is Cytoplasmic. Residues 449–468 (ADTQSSHLHEDRTARVSQPS) form a disordered region.

In terms of assembly, interacts with peptide-free HLA-A*02-B2M complexes or those loaded with low affinity peptides, likely facilitating peptide exchange onto higher affinity peptides. Interacts with MR1 in a ligand-independent way; this interaction may stabilize MR1 pool and facilitate ligand loading and dissociation.

Its subcellular location is the cell membrane. It is found in the endoplasmic reticulum membrane. The protein localises to the microsome membrane. The protein resides in the golgi apparatus membrane. Functionally, component of the antigen processing and presentation pathway, which binds to MHC class I coupled with beta2-microglobulin/B2M. Association between TAPBPR and MHC class I occurs in the absence of a functional peptide-loading complex (PLC). The polypeptide is Tapasin-related protein (TAPBPL) (Homo sapiens (Human)).